A 413-amino-acid chain; its full sequence is Multifunctional CCA protein (413 aa).

ATP is bound by residues G8 and R11. CTP is bound by residues G8 and R11. The Mg(2+) site is built by D21 and D23. 3 residues coordinate ATP: R91, R137, and R140. CTP is bound by residues R91, R137, and R140. The HD domain occupies 228–329 (TGIHTLMVLA…IKIFDKADLW (102 aa)).

The protein belongs to the tRNA nucleotidyltransferase/poly(A) polymerase family. Bacterial CCA-adding enzyme type 1 subfamily. In terms of assembly, monomer. Can also form homodimers and oligomers. Mg(2+) is required as a cofactor. Ni(2+) serves as cofactor.

The catalysed reaction is a tRNA precursor + 2 CTP + ATP = a tRNA with a 3' CCA end + 3 diphosphate. The enzyme catalyses a tRNA with a 3' CCA end + 2 CTP + ATP = a tRNA with a 3' CCACCA end + 3 diphosphate. Catalyzes the addition and repair of the essential 3'-terminal CCA sequence in tRNAs without using a nucleic acid template. Adds these three nucleotides in the order of C, C, and A to the tRNA nucleotide-73, using CTP and ATP as substrates and producing inorganic pyrophosphate. tRNA 3'-terminal CCA addition is required both for tRNA processing and repair. Also involved in tRNA surveillance by mediating tandem CCA addition to generate a CCACCA at the 3' terminus of unstable tRNAs. While stable tRNAs receive only 3'-terminal CCA, unstable tRNAs are marked with CCACCA and rapidly degraded. The sequence is that of Multifunctional CCA protein from Shewanella woodyi (strain ATCC 51908 / MS32).